The primary structure comprises 215 residues: Small ribosomal subunit protein uS3c (215 aa).

Residues 43-116 (IKNYIKKNMK…KLNMAITRIA (74 aa)) form the KH type-2 domain.

This sequence belongs to the universal ribosomal protein uS3 family. Part of the 30S ribosomal subunit.

Its subcellular location is the plastid. It is found in the chloroplast. This chain is Small ribosomal subunit protein uS3c (rps3), found in Morus indica (Mulberry).